Here is a 240-residue protein sequence, read N- to C-terminus: Ubiquinone biosynthesis O-methyltransferase (240 aa).

4 residues coordinate S-adenosyl-L-methionine: Arg44, Gly64, Asp85, and Met129.

This sequence belongs to the methyltransferase superfamily. UbiG/COQ3 family.

The enzyme catalyses a 3-demethylubiquinol + S-adenosyl-L-methionine = a ubiquinol + S-adenosyl-L-homocysteine + H(+). It carries out the reaction a 3-(all-trans-polyprenyl)benzene-1,2-diol + S-adenosyl-L-methionine = a 2-methoxy-6-(all-trans-polyprenyl)phenol + S-adenosyl-L-homocysteine + H(+). It participates in cofactor biosynthesis; ubiquinone biosynthesis. Functionally, O-methyltransferase that catalyzes the 2 O-methylation steps in the ubiquinone biosynthetic pathway. This Escherichia coli O81 (strain ED1a) protein is Ubiquinone biosynthesis O-methyltransferase.